The chain runs to 279 residues: 3-methyl-2-oxobutanoate hydroxymethyltransferase (279 aa).

The Mg(2+) site is built by Asp-44 and Asp-83. 3-methyl-2-oxobutanoate contacts are provided by residues 44–45, Asp-83, and Lys-112; that span reads DS. Glu-114 provides a ligand contact to Mg(2+). The Proton acceptor role is filled by Glu-180.

Belongs to the PanB family. In terms of assembly, homodecamer; pentamer of dimers. Requires Mg(2+) as cofactor.

Its subcellular location is the cytoplasm. The enzyme catalyses 3-methyl-2-oxobutanoate + (6R)-5,10-methylene-5,6,7,8-tetrahydrofolate + H2O = 2-dehydropantoate + (6S)-5,6,7,8-tetrahydrofolate. Its pathway is cofactor biosynthesis; (R)-pantothenate biosynthesis; (R)-pantoate from 3-methyl-2-oxobutanoate: step 1/2. Functionally, catalyzes the reversible reaction in which hydroxymethyl group from 5,10-methylenetetrahydrofolate is transferred onto alpha-ketoisovalerate to form ketopantoate. The chain is 3-methyl-2-oxobutanoate hydroxymethyltransferase from Chloroflexus aggregans (strain MD-66 / DSM 9485).